The primary structure comprises 647 residues: Putative pre-mRNA-splicing factor ATP-dependent RNA helicase C20H4.09 (647 aa).

A Helicase ATP-binding domain is found at 35–199 (LYAVEQNQIT…FGQDKVCTMS (165 aa)). 48–55 (GHTGCGKT) lines the ATP pocket. Positions 146–149 (DEVH) match the DEAH box motif. Residues 219–398 (YVDSAIETVI…PLVLFLKGLG (180 aa)) enclose the Helicase C-terminal domain.

Belongs to the DEAD box helicase family. DEAH subfamily.

Its subcellular location is the nucleus. The catalysed reaction is ATP + H2O = ADP + phosphate + H(+). Its function is as follows. Pre-mRNA processing factor involved in disassembly of spliceosomes after the release of mature mRNA. This chain is Putative pre-mRNA-splicing factor ATP-dependent RNA helicase C20H4.09, found in Schizosaccharomyces pombe (strain 972 / ATCC 24843) (Fission yeast).